We begin with the raw amino-acid sequence, 88 residues long: HssA/B-like protein 61 (88 aa).

The protein belongs to the hssA/B family.

In Dictyostelium discoideum (Social amoeba), this protein is HssA/B-like protein 61 (hssl61).